The following is a 387-amino-acid chain: Alpha-sarcoglycan (387 aa).

Residues 1–23 (MAAAVTWIPLLAGLLAGLRDTKA) form the signal peptide. Residues 24–293 (QQTTLHLLVG…RDFLTDALVT (270 aa)) are Extracellular-facing. Asparagine 174 and asparagine 246 each carry an N-linked (GlcNAc...) asparagine glycan. Residues 294–314 (LLVPLLVALLLTLLLAYIMCF) form a helical membrane-spanning segment. The Cytoplasmic portion of the chain corresponds to 315–387 (RREGRLKRDM…AQMPLILDQH (73 aa)). Serine 377 bears the Phosphoserine mark.

Belongs to the sarcoglycan alpha/epsilon family. Cross-link to form 2 major subcomplexes: one consisting of SGCB, SGCD and SGCG and the other consisting of SGCB and SGCD. The association between SGCB and SGCG is particularly strong while SGCA is loosely associated with the other sarcoglycans. Interacts with the syntrophin SNTA1. Striated muscle, both skeletal and cardiac.

Its subcellular location is the cell membrane. It is found in the sarcolemma. The protein localises to the cytoplasm. The protein resides in the cytoskeleton. Functionally, component of the sarcoglycan complex, a subcomplex of the dystrophin-glycoprotein complex which forms a link between the F-actin cytoskeleton and the extracellular matrix. The sequence is that of Alpha-sarcoglycan (Sgca) from Mus musculus (Mouse).